A 437-amino-acid polypeptide reads, in one-letter code: Enolase (437 aa).

Position 162 (Q162) interacts with (2R)-2-phosphoglycerate. E204 acts as the Proton donor in catalysis. Residues D251, E297, and D324 each contribute to the Mg(2+) site. The (2R)-2-phosphoglycerate site is built by K349, R378, S379, and K400. K349 acts as the Proton acceptor in catalysis.

The protein belongs to the enolase family. The cofactor is Mg(2+).

The protein resides in the cytoplasm. Its subcellular location is the secreted. The protein localises to the cell surface. The enzyme catalyses (2R)-2-phosphoglycerate = phosphoenolpyruvate + H2O. Its pathway is carbohydrate degradation; glycolysis; pyruvate from D-glyceraldehyde 3-phosphate: step 4/5. Functionally, catalyzes the reversible conversion of 2-phosphoglycerate (2-PG) into phosphoenolpyruvate (PEP). It is essential for the degradation of carbohydrates via glycolysis. This chain is Enolase, found in Chlorobium phaeovibrioides (strain DSM 265 / 1930) (Prosthecochloris vibrioformis (strain DSM 265)).